Consider the following 107-residue polypeptide: Phosphoribosyl-ATP pyrophosphatase (107 aa).

Belongs to the PRA-PH family.

The protein resides in the cytoplasm. It catalyses the reaction 1-(5-phospho-beta-D-ribosyl)-ATP + H2O = 1-(5-phospho-beta-D-ribosyl)-5'-AMP + diphosphate + H(+). It functions in the pathway amino-acid biosynthesis; L-histidine biosynthesis; L-histidine from 5-phospho-alpha-D-ribose 1-diphosphate: step 2/9. The protein is Phosphoribosyl-ATP pyrophosphatase of Zymomonas mobilis subsp. mobilis (strain ATCC 31821 / ZM4 / CP4).